The primary structure comprises 456 residues: Ezy-1 protein (456 aa).

The first 28 residues, 1-28 (MQLSSSLRSARSAAASSGCALASRPVVA), serve as a signal peptide directing secretion. 3 disordered regions span residues 167-189 (SDGG…DGDG), 273-310 (FTGK…GGSG), and 414-456 (QPAG…SPNM). Acidic residues predominate over residues 281–293 (AEGDDGEDEEEGE). The span at 418-428 (DGHEPEPKRPE) shows a compositional bias: basic and acidic residues.

The sequence is that of Ezy-1 protein (Ezy-1) from Chlamydomonas reinhardtii (Chlamydomonas smithii).